Consider the following 633-residue polypeptide: MHGLLLAGLLALPMNVLAHPAEQHASNVLSRRGVDIESFRLPLKAKYMDSDAAAQKIQAMSFSKDDDYVSTATKLVKSTFPKSTFRVVDDHYIGTNGIGHVHFKQTAHGLDIDNSDFNVNIGRDGKVFSFGNSFFTGEIPKENPMVKRAFSDPVKALKGAVKALNLPVKSDNAKAKTTAGKESFEFMGTTGALSAPKANLVYLQKEDGTLALTWRVETDVGDNWLLTYVDAHNSETVHNVVDYVASAEFKVFAWGLNDPTEGNPTSIRDPWTDSSPYTWHSDGMTKYPTTRGNNAIAQDNPTGGSTYINNYRPQSPNLIFNYPWSPTATPPSSYKDFSITQLFYTTNRFHDLLYSFGFNEAAGNFQVNNGNKGGRGNDFAIVNAQDGSGTNNANFATPPDGSPGRMRMYNWTTARPNRDGCLEAGIVIHEYAHGLSNRLCGGPANSGCLNALESGGMGEGWGDFYATAIRLKPRDTKDTNYSMGAWAANNPKGIRAYLYSTNLQTNPYMYTSVNSLREVHQIGTVWATMLYDLMWALIEAHGGTYSANPVFRNGVPQDGRHLAMKLVMDGMALQPCNPNFVQARDAILDADRALTNSANKCTIWKAFAKRGLGYGAKYDARNRTGSNRLPPGC.

The first 18 residues, 1–18 (MHGLLLAGLLALPMNVLA), serve as a signal peptide directing secretion. A propeptide spanning residues 19 to 246 (HPAEQHASNV…VHNVVDYVAS (228 aa)) is cleaved from the precursor. Residue Asn-410 is glycosylated (N-linked (GlcNAc...) asparagine). His-429 contributes to the Zn(2+) binding site. Glu-430 is a catalytic residue. His-433 contributes to the Zn(2+) binding site. 2 N-linked (GlcNAc...) asparagine glycosylation sites follow: Asn-480 and Asn-622.

Belongs to the peptidase M36 family. Zn(2+) is required as a cofactor.

The protein resides in the secreted. Its function is as follows. Secreted metalloproteinase probably acting as a virulence factor. The sequence is that of Extracellular metalloproteinase 3 (MEP3) from Arthroderma benhamiae (Trichophyton mentagrophytes).